A 158-amino-acid polypeptide reads, in one-letter code: SsrA-binding protein (158 aa).

The span at 133-148 shows a compositional bias: basic and acidic residues; it reads KAQDKRETSAKRDWNR. Residues 133–158 form a disordered region; it reads KAQDKRETSAKRDWNRQKARLLKQNG. Positions 149–158 are enriched in basic residues; it reads QKARLLKQNG.

Belongs to the SmpB family.

The protein resides in the cytoplasm. Its function is as follows. Required for rescue of stalled ribosomes mediated by trans-translation. Binds to transfer-messenger RNA (tmRNA), required for stable association of tmRNA with ribosomes. tmRNA and SmpB together mimic tRNA shape, replacing the anticodon stem-loop with SmpB. tmRNA is encoded by the ssrA gene; the 2 termini fold to resemble tRNA(Ala) and it encodes a 'tag peptide', a short internal open reading frame. During trans-translation Ala-aminoacylated tmRNA acts like a tRNA, entering the A-site of stalled ribosomes, displacing the stalled mRNA. The ribosome then switches to translate the ORF on the tmRNA; the nascent peptide is terminated with the 'tag peptide' encoded by the tmRNA and targeted for degradation. The ribosome is freed to recommence translation, which seems to be the essential function of trans-translation. This is SsrA-binding protein from Jannaschia sp. (strain CCS1).